The sequence spans 232 residues: Ribonuclease 3 (232 aa).

Residues 6 to 135 (QDYLAKTYGI…FIGALYLDQG (130 aa)) enclose the RNase III domain. Glu-48 contacts Mg(2+). Asp-52 is a catalytic residue. Mg(2+) is bound by residues Asp-121 and Glu-124. The active site involves Glu-124. The DRBM domain maps to 161–230 (DAKTSLQEFL…AKHALEKLRM (70 aa)).

It belongs to the ribonuclease III family. In terms of assembly, homodimer. The cofactor is Mg(2+).

It is found in the cytoplasm. The enzyme catalyses Endonucleolytic cleavage to 5'-phosphomonoester.. Digests double-stranded RNA. Involved in the processing of primary rRNA transcript to yield the immediate precursors to the large and small rRNAs (23S and 16S). Processes some mRNAs, and tRNAs when they are encoded in the rRNA operon. Processes pre-crRNA and tracrRNA of type II CRISPR loci if present in the organism. This Limosilactobacillus fermentum (strain NBRC 3956 / LMG 18251) (Lactobacillus fermentum) protein is Ribonuclease 3.